A 779-amino-acid polypeptide reads, in one-letter code: Endoribonuclease YSH1 (779 aa).

Zn(2+) is bound by residues His68, His70, Asp72, His73, His163, and Asp184. The active-site Proton donor is the His408. His430 contacts Zn(2+). Ser517 carries the post-translational modification Phosphoserine; by ATM or ATR.

This sequence belongs to the metallo-beta-lactamase superfamily. RNA-metabolizing metallo-beta-lactamase-like family. CPSF2/YSH1 subfamily. In terms of assembly, component of the cleavage and polyadenylation factor (CPF) complex, which is composed of at least PTI1, SYC1, SSU72, GLC7, MPE1, REF2, PFS2, PTA1, YSH1/BRR5, SWD2, CFT2/YDH1, YTH1, CFT1/YHH1, FIP1 and PAP1. Interacts with FIP1, PFS2, RNA14 and YTH1. Requires Zn(2+) as cofactor.

Its subcellular location is the nucleus. In terms of biological role, component of the cleavage and polyadenylation factor (CPF) complex, which plays a key role in polyadenylation-dependent pre-mRNA 3'-end formation and cooperates with cleavage factors including the CFIA complex and NAB4/CFIB. Has endonuclease activity. The chain is Endoribonuclease YSH1 (YSH1) from Saccharomyces cerevisiae (strain ATCC 204508 / S288c) (Baker's yeast).